Consider the following 91-residue polypeptide: Small ribosomal subunit protein uS15 (91 aa).

It belongs to the universal ribosomal protein uS15 family. Part of the 30S ribosomal subunit. Forms a bridge to the 50S subunit in the 70S ribosome, contacting the 23S rRNA.

One of the primary rRNA binding proteins, it binds directly to 16S rRNA where it helps nucleate assembly of the platform of the 30S subunit by binding and bridging several RNA helices of the 16S rRNA. Functionally, forms an intersubunit bridge (bridge B4) with the 23S rRNA of the 50S subunit in the ribosome. This Nautilia profundicola (strain ATCC BAA-1463 / DSM 18972 / AmH) protein is Small ribosomal subunit protein uS15.